The following is a 63-amino-acid chain: uncharacterized protein (63 aa).

This is an uncharacterized protein from Bdellovibrio bacteriovorus (Bacteriophage phiMH2K).